The primary structure comprises 358 residues: Endoplasmic reticulum junction formation protein lunapark-B (358 aa).

Residues 1 to 45 are Cytoplasmic-facing; sequence MGAIISRWKTKLTTVEQLENIDKEIKQLEEFRAKNQRLQKLWVGR. The stretch at 9 to 41 forms a coiled coil; sequence KTKLTTVEQLENIDKEIKQLEEFRAKNQRLQKL. The chain crosses the membrane as a helical span at residues 46–66; that stretch reads LLLYSSALYLLISLFVYLLYL. At 67–69 the chain is on the lumenal side; it reads PEQ. The chain crosses the membrane as a helical span at residues 70-90; it reads WLLRLAMALPFFIYPVLVWFI. Residues 91-358 are Cytoplasmic-facing; that stretch reads RRFLIFLFSK…SRGMDKHGRA (268 aa). Residues 99 to 128 are a coiled coil; sequence SKRSERNNDKLEDLKATKKKILEEVMETET. The segment at 275-300 adopts a C4-type; plays a role in ER morphology zinc-finger fold; the sequence is CQQCFSHNGMALKEEFEYLAFRCAYC. A disordered region spans residues 320–358; it reads NFEKRLRAESSTPGPAPHSATDTEESAPPSRGMDKHGRA.

Belongs to the lunapark family. As to quaternary structure, homodimer; homodimerization requires the C4-type zinc finger motif and decreases during mitosis in a phosphorylation-dependent manner. Phosphorylated. Phosphorylation occurs during interphase. Phosphorylation also occurs during mitosis; these phosphorylations reduce both its homodimerization and the ER three-way tubular junction formation.

Its subcellular location is the endoplasmic reticulum membrane. Its function is as follows. Endoplasmic reticulum (ER)-shaping membrane protein that plays a role in determining ER morphology. Involved in the stabilization of nascent three-way ER tubular junctions within the ER network. May also play a role as a curvature-stabilizing protein within three-way ER tubular junction network. The chain is Endoplasmic reticulum junction formation protein lunapark-B (lnpkb) from Takifugu rubripes (Japanese pufferfish).